A 189-amino-acid chain; its full sequence is Lipid A acyltransferase PagP (189 aa).

Residues 1–23 (MKLKSVLYLLMLLNCLGLKSAHA) form the signal peptide. Residues His-61, Asp-104, and Ser-105 contribute to the active site.

This sequence belongs to the lipid A palmitoyltransferase family. Homodimer.

Its subcellular location is the cell outer membrane. It catalyses the reaction a lipid A + a 1,2-diacyl-sn-glycero-3-phosphocholine = a hepta-acyl lipid A + a 2-acyl-sn-glycero-3-phosphocholine. It carries out the reaction a lipid IVA + a 1,2-diacyl-sn-glycero-3-phosphocholine = a lipid IVB + a 2-acyl-sn-glycero-3-phosphocholine. The catalysed reaction is a lipid IIA + a 1,2-diacyl-sn-glycero-3-phosphocholine = a lipid IIB + a 2-acyl-sn-glycero-3-phosphocholine. Its function is as follows. Transfers a fatty acid residue from the sn-1 position of a phospholipid to the N-linked hydroxyfatty acid chain on the proximal unit of lipid A or its precursors. In Erwinia amylovora (strain ATCC 49946 / CCPPB 0273 / Ea273 / 27-3), this protein is Lipid A acyltransferase PagP.